The sequence spans 257 residues: Snake venom serine protease KN8 (257 aa).

A signal peptide spans 1-18; that stretch reads MVLIRVLANLLILQLSYA. A propeptide spanning residues 19-24 is cleaved from the precursor; that stretch reads QKSSEL. The Peptidase S1 domain occupies 25–248; sequence VVGGLPCNIN…HLDWIKSIIA (224 aa). 5 disulfide bridges follow: C31/C162, C49/C65, C141/C209, C173/C188, and C199/C224. The active-site Charge relay system is the H64. N102 carries an N-linked (GlcNAc...) asparagine glycan. The Charge relay system role is filled by D109. N-linked (GlcNAc...) asparagine glycans are attached at residues N120 and N121. The active-site Charge relay system is the S203.

Belongs to the peptidase S1 family. Snake venom subfamily. Monomer. In terms of tissue distribution, expressed by the venom gland.

The protein resides in the secreted. In terms of biological role, snake venom serine protease that may act in the hemostasis system of the prey. The chain is Snake venom serine protease KN8 from Trimeresurus stejnegeri (Chinese green tree viper).